The following is a 374-amino-acid chain: MVLWESPRQCSSWTLCEGFCWLLLLPVTLLIIARPVKLAAFPTSLSDCQTPTGWNCSGYDDRENDLFLCDTNTCKFDGECLRIGDTVTCVCQFKCNSDYVPVCGSNGESYQNECYLRQAACKQQSEILVVSEGSCATDTGSGSGDGVHEGSGETSQKETSTCDICQFGAECDEDAEDVWCVCNIDCSQTNFNPLCASDGKSYDNACQIKEASCQKQEKIEVMSLGRCQDNTTTTTKSEDGHYARTDYAENANKLEESAREHHIPCPEHYNGFCMHGKCEHSINMQEPSCRCDAGYTGQHCEKKDYSVLYVVPGPVRFQYVLIAAVIGTIQIAVICVVVLCITRKCPRSNRIHRQKQNTGHYSSDNTTRASTRLI.

The N-terminal stretch at 1-40 (MVLWESPRQCSSWTLCEGFCWLLLLPVTLLIIARPVKLAA) is a signal peptide. Topologically, residues 41 to 320 (FPTSLSDCQT…VPGPVRFQYV (280 aa)) are extracellular. A glycan (N-linked (GlcNAc...) asparagine) is linked at asparagine 55. Kazal-like domains lie at 90-137 (VCQF…SCAT) and 181-229 (VCNI…RCQD). 6 disulfide bridges follow: cysteine 91–cysteine 121, cysteine 95–cysteine 114, cysteine 103–cysteine 135, cysteine 182–cysteine 213, cysteine 186–cysteine 206, and cysteine 195–cysteine 227. Residue asparagine 230 is glycosylated (N-linked (GlcNAc...) asparagine). The EGF-like domain occupies 261 to 301 (HHIPCPEHYNGFCMHGKCEHSINMQEPSCRCDAGYTGQHCE). Intrachain disulfides connect cysteine 265/cysteine 278, cysteine 273/cysteine 289, and cysteine 291/cysteine 300. Residues 303–320 (KDYSVLYVVPGPVRFQYV) form a required for shedding region. The chain crosses the membrane as a helical span at residues 321 to 341 (LIAAVIGTIQIAVICVVVLCI). The Cytoplasmic segment spans residues 342–374 (TRKCPRSNRIHRQKQNTGHYSSDNTTRASTRLI). The disordered stretch occupies residues 353-374 (RQKQNTGHYSSDNTTRASTRLI). Polar residues predominate over residues 356–374 (QNTGHYSSDNTTRASTRLI).

The protein belongs to the tomoregulin family. Post-translationally, O-glycosylated; contains chondroitin sulfate glycosaminoglycans. A soluble form (TMEFF2-ECD) is produced by proteolytic shedding. This shedding can be induced by phorbol ester or pro-inflammatory cytokines such as TNFalpha, and is mediated by a metalloproteinase ADAM. As to expression, widely expressed in the brain. In the olfactory bulb expressed in mitral cell, granule, and glomerular layers. In the hippocampus expressed in hippocampal cornu ammonis, pyramidal layer, dentate gyrus, and substantia nigra pars compacta.

It is found in the membrane. In terms of biological role, may be a survival factor for hippocampal and mesencephalic neurons. The shedded form may up-regulate cell proliferation. The sequence is that of Tomoregulin-2 (Tmeff2) from Mus musculus (Mouse).